Consider the following 186-residue polypeptide: Casparian strip membrane protein 3 (186 aa).

Topologically, residues 1–26 (MKAGALELGEGSKTSIPRGGVNRGIS) are cytoplasmic. Residues 27 to 47 (ILDFILRLITIIGTLGSAIAM) traverse the membrane as a helical segment. Residues 48–74 (GTTNETLPFFTQFTQFRAEYDDLPTFT) are Extracellular-facing. The N-linked (GlcNAc...) asparagine glycan is linked to Asn51. The chain crosses the membrane as a helical span at residues 75–95 (FFVIANSIVSGYLVLSLPMSI). The Cytoplasmic portion of the chain corresponds to 96 to 107 (LHIVRSGARASR). Residues 108-128 (IVLIFFDTAMLALLTAAASAA) traverse the membrane as a helical segment. Residues 129 to 161 (SAIVYLAHKGNAQANWFAICQQFKSFCERISGS) are Extracellular-facing. A helical membrane pass occupies residues 162 to 182 (LIGSFGGIILFILLVLLSAVA). The Cytoplasmic portion of the chain corresponds to 183 to 186 (LSRC).

It belongs to the Casparian strip membrane proteins (CASP) family. Homodimer and heterodimers.

Its subcellular location is the cell membrane. Regulates membrane-cell wall junctions and localized cell wall deposition. Required for establishment of the Casparian strip membrane domain (CSD) and the subsequent formation of Casparian strips, a cell wall modification of the root endodermis that determines an apoplastic barrier between the intraorganismal apoplasm and the extraorganismal apoplasm and prevents lateral diffusion. The polypeptide is Casparian strip membrane protein 3 (Vitis vinifera (Grape)).